Here is a 318-residue protein sequence, read N- to C-terminus: Glutathione synthetase (318 aa).

One can recognise an ATP-grasp domain in the interval 124–310; sequence EKLFTAWFPE…ITGKLMDAIE (187 aa). 150–207 provides a ligand contact to ATP; sequence FREQHGDVILKPLDGMGGASIFRVKEGDPNLSVIIETLTNHGQNYCMAQTFVPDISNG. Residues Glu281 and Asn283 each coordinate Mg(2+).

Belongs to the prokaryotic GSH synthase family. Mg(2+) is required as a cofactor. Mn(2+) serves as cofactor.

It carries out the reaction gamma-L-glutamyl-L-cysteine + glycine + ATP = glutathione + ADP + phosphate + H(+). Its pathway is sulfur metabolism; glutathione biosynthesis; glutathione from L-cysteine and L-glutamate: step 2/2. The sequence is that of Glutathione synthetase from Vibrio cholerae serotype O1 (strain ATCC 39315 / El Tor Inaba N16961).